The chain runs to 907 residues: Protein translocase subunit SecA (907 aa).

Residues Gln87, 105–109 (GEGKT), and Asp513 each bind ATP. Residues 841–853 (EAQRRAQAEEAAR) show a composition bias toward basic and acidic residues. A disordered region spans residues 841–907 (EAQRRAQAEE…KYKQCHGQIN (67 aa)). Over residues 854–865 (RAQAQHASAQSQ) the composition is skewed to low complexity. Positions 872–887 (EGHHQPVVRDERKVGR) are enriched in basic and acidic residues. Zn(2+)-binding residues include Cys891, Cys893, Cys902, and His903.

It belongs to the SecA family. As to quaternary structure, monomer and homodimer. Part of the essential Sec protein translocation apparatus which comprises SecA, SecYEG and auxiliary proteins SecDF-YajC and YidC. The cofactor is Zn(2+).

It is found in the cell inner membrane. The protein resides in the cytoplasm. It carries out the reaction ATP + H2O + cellular proteinSide 1 = ADP + phosphate + cellular proteinSide 2.. In terms of biological role, part of the Sec protein translocase complex. Interacts with the SecYEG preprotein conducting channel. Has a central role in coupling the hydrolysis of ATP to the transfer of proteins into and across the cell membrane, serving both as a receptor for the preprotein-SecB complex and as an ATP-driven molecular motor driving the stepwise translocation of polypeptide chains across the membrane. The polypeptide is Protein translocase subunit SecA (Vibrio vulnificus (strain CMCP6)).